A 210-amino-acid polypeptide reads, in one-letter code: MARKKVLVLHSGGMDSTTCLLQAKAEGHDVASLGIDYGQRLLVEMMFAEGQCEKYSIPRHVINVNWQKAERQIPLNRSVEEMAHSVSPAFLPGRNIVFLGLGHAHAAGIGADELQIGLNCVDFSGYPDCTTQFYDSYCTMLNIGNPGGPKLVAPLLKMSKPEIARLASTLGLQRNDTWSCYRPQIREGSIVACGECDACKLHEFAWQELK.

10–20 (HSGGMDSTTCL) provides a ligand contact to ATP. Positions 180, 193, 196, and 199 each coordinate Zn(2+).

It belongs to the QueC family. It depends on Zn(2+) as a cofactor.

The catalysed reaction is 7-carboxy-7-deazaguanine + NH4(+) + ATP = 7-cyano-7-deazaguanine + ADP + phosphate + H2O + H(+). It participates in purine metabolism; 7-cyano-7-deazaguanine biosynthesis. Catalyzes the ATP-dependent conversion of 7-carboxy-7-deazaguanine (CDG) to 7-cyano-7-deazaguanine (preQ(0)). In Rhodopseudomonas palustris (strain HaA2), this protein is 7-cyano-7-deazaguanine synthase 2.